The chain runs to 993 residues: Glycine dehydrogenase (decarboxylating) (993 aa).

Lysine 715 is modified (N6-(pyridoxal phosphate)lysine).

Belongs to the GcvP family. As to quaternary structure, the glycine cleavage system is composed of four proteins: P, T, L and H. Pyridoxal 5'-phosphate is required as a cofactor.

The enzyme catalyses N(6)-[(R)-lipoyl]-L-lysyl-[glycine-cleavage complex H protein] + glycine + H(+) = N(6)-[(R)-S(8)-aminomethyldihydrolipoyl]-L-lysyl-[glycine-cleavage complex H protein] + CO2. Its function is as follows. The glycine cleavage system catalyzes the degradation of glycine. The P protein binds the alpha-amino group of glycine through its pyridoxal phosphate cofactor; CO(2) is released and the remaining methylamine moiety is then transferred to the lipoamide cofactor of the H protein. The protein is Glycine dehydrogenase (decarboxylating) of Xylella fastidiosa (strain Temecula1 / ATCC 700964).